Here is a 525-residue protein sequence, read N- to C-terminus: Zinc finger C2HC domain-containing protein 1C (525 aa).

The span at 23–34 (AHGLHSAKHDPY) shows a compositional bias: basic and acidic residues. Disordered regions lie at residues 23-48 (AHGL…MGHL), 85-107 (CPHS…GKGL), and 145-171 (VHRK…PDSS). The span at 36-48 (QSDSPQRSSMGHL) shows a compositional bias: polar residues. Residues 90-102 (GISQQGSGNNAQG) are compositionally biased toward low complexity. The stretch at 207–252 (TQIQRLEAAGESLQKEIRRKEILLREKLKKTEEGLRRIQREKKQAI) forms a coiled coil. Disordered stretches follow at residues 292–316 (SRNR…LSDY), 330–349 (NNKI…SQPA), and 356–379 (LQAS…EQEL). The segment covering 301 to 312 (CEQAQENSSPLQ) has biased composition (polar residues). Residues 359 to 373 (SSLSGTPGSSGSSSS) are compositionally biased toward low complexity. 2 consecutive C2HC/C3H-type zinc fingers follow at residues 378–407 (ELGK…MQGS) and 487–516 (DYVQ…IKNR). Zn(2+) contacts are provided by Cys-382, Cys-385, His-397, Cys-401, Cys-491, Cys-494, His-506, and Cys-510.

The protein belongs to the ZC2HC1 family. Zn(2+) serves as cofactor.

The sequence is that of Zinc finger C2HC domain-containing protein 1C (Zc2hc1c) from Rattus norvegicus (Rat).